The primary structure comprises 318 residues: Methionyl-tRNA formyltransferase (318 aa).

110 to 113 is a binding site for (6S)-5,6,7,8-tetrahydrofolate; the sequence is SLLP.

The protein belongs to the Fmt family.

It catalyses the reaction L-methionyl-tRNA(fMet) + (6R)-10-formyltetrahydrofolate = N-formyl-L-methionyl-tRNA(fMet) + (6S)-5,6,7,8-tetrahydrofolate + H(+). Attaches a formyl group to the free amino group of methionyl-tRNA(fMet). The formyl group appears to play a dual role in the initiator identity of N-formylmethionyl-tRNA by promoting its recognition by IF2 and preventing the misappropriation of this tRNA by the elongation apparatus. The chain is Methionyl-tRNA formyltransferase from Ligilactobacillus salivarius (strain UCC118) (Lactobacillus salivarius).